The following is a 96-amino-acid chain: Aspartyl/glutamyl-tRNA(Asn/Gln) amidotransferase subunit C (96 aa).

Belongs to the GatC family. In terms of assembly, heterotrimer of A, B and C subunits.

It carries out the reaction L-glutamyl-tRNA(Gln) + L-glutamine + ATP + H2O = L-glutaminyl-tRNA(Gln) + L-glutamate + ADP + phosphate + H(+). It catalyses the reaction L-aspartyl-tRNA(Asn) + L-glutamine + ATP + H2O = L-asparaginyl-tRNA(Asn) + L-glutamate + ADP + phosphate + 2 H(+). Its function is as follows. Allows the formation of correctly charged Asn-tRNA(Asn) or Gln-tRNA(Gln) through the transamidation of misacylated Asp-tRNA(Asn) or Glu-tRNA(Gln) in organisms which lack either or both of asparaginyl-tRNA or glutaminyl-tRNA synthetases. The reaction takes place in the presence of glutamine and ATP through an activated phospho-Asp-tRNA(Asn) or phospho-Glu-tRNA(Gln). This is Aspartyl/glutamyl-tRNA(Asn/Gln) amidotransferase subunit C from Geobacillus kaustophilus (strain HTA426).